The primary structure comprises 151 residues: Deoxyuridine 5'-triphosphate nucleotidohydrolase (151 aa).

Residues 70 to 72 (RSG), Asn-83, 87 to 89 (LID), and Met-97 each bind substrate.

This sequence belongs to the dUTPase family. Mg(2+) is required as a cofactor.

The catalysed reaction is dUTP + H2O = dUMP + diphosphate + H(+). It functions in the pathway pyrimidine metabolism; dUMP biosynthesis; dUMP from dCTP (dUTP route): step 2/2. Functionally, this enzyme is involved in nucleotide metabolism: it produces dUMP, the immediate precursor of thymidine nucleotides and it decreases the intracellular concentration of dUTP so that uracil cannot be incorporated into DNA. This chain is Deoxyuridine 5'-triphosphate nucleotidohydrolase, found in Tolumonas auensis (strain DSM 9187 / NBRC 110442 / TA 4).